Here is a 264-residue protein sequence, read N- to C-terminus: Apolipoprotein A-I (264 aa).

Residues 1-18 (MKAVVLTVAVFFLTGSQA) form the signal peptide. Repeat copies occupy residues 67–88 (LKLLDNWDSLSSTVSKLREQIG) and 89–110 (PVTQEFWDKLEKDTVSLRQEMN). A 10 X approximate tandem repeats region spans residues 67–264 (LKLLDNWDSL…DEATKKLTTQ (198 aa)). Met-109 carries the methionine sulfoxide modification. Residues 111–121 (KDLEEVKLKVQ) form a 3; half-length repeat. Tandem repeats lie at residues 122–143 (PYLDEFQKRWQEDVERYRQQVE), 144–165 (PLGTELREGARQKLQELHEKLS), and 166–187 (PLGQELRDRARAHVDALRTHLA). The stretch at 188–207 (PYSDELRQRLAARLEALKES) is one 7; truncated repeat. Repeat unit 8 spans residues 208-229 (SSLADYQAKATEHLSALGEKAK). Residues 230-240 (PALEDLRQGLL) form a 9; half-length repeat. Repeat 10 spans residues 241–264 (PVLENLKMSFWSAVDEATKKLTTQ).

This sequence belongs to the apolipoprotein A1/A4/E family. Homodimer. Interacts with APOA1BP and CLU. Component of a sperm activating protein complex (SPAP), consisting of APOA1, an immunoglobulin heavy chain, an immunoglobulin light chain and albumin. Interacts with NDRG1. Interacts with SCGB3A2. Interacts with NAXE and YJEFN3. Post-translationally, glycosylated. In terms of processing, palmitoylated. Phosphorylation sites are present in the extracellular medium.

It is found in the secreted. Functionally, participates in the reverse transport of cholesterol from tissues to the liver for excretion by promoting cholesterol efflux from tissues and by acting as a cofactor for the lecithin cholesterol acyltransferase (LCAT). As part of the SPAP complex, activates spermatozoa motility. This chain is Apolipoprotein A-I (ApoA1), found in Marmota monax (Woodchuck).